A 101-amino-acid polypeptide reads, in one-letter code: Small ribosomal subunit protein bS6 (101 aa).

The protein belongs to the bacterial ribosomal protein bS6 family.

Its function is as follows. Binds together with bS18 to 16S ribosomal RNA. The chain is Small ribosomal subunit protein bS6 from Staphylococcus saprophyticus subsp. saprophyticus (strain ATCC 15305 / DSM 20229 / NCIMB 8711 / NCTC 7292 / S-41).